Here is an 86-residue protein sequence, read N- to C-terminus: Small ribosomal subunit protein bS20 (86 aa).

The segment covering 1-11 (MANIKQQKKRN) has biased composition (basic residues). Residues 1 to 20 (MANIKQQKKRNKTNEKRRLQ) are disordered.

This sequence belongs to the bacterial ribosomal protein bS20 family.

In terms of biological role, binds directly to 16S ribosomal RNA. In Aster yellows witches'-broom phytoplasma (strain AYWB), this protein is Small ribosomal subunit protein bS20.